Consider the following 154-residue polypeptide: uncharacterized protein (154 aa).

12–19 (GSSDVGKT) serves as a coordination point for GTP. The G domain maps to 17-112 (GKTTLMENLI…KIPYGIFINK (96 aa)).

It to M.thermoautotrophicum MTH765.

This is an uncharacterized protein from Methanocaldococcus jannaschii (strain ATCC 43067 / DSM 2661 / JAL-1 / JCM 10045 / NBRC 100440) (Methanococcus jannaschii).